The following is a 130-amino-acid chain: MAGREGRTRQRTLRDTIPDCALRSQTLESLDARYVSRDGAHDAAVWFEDMTPAELEVVFPTTDAKLNYLSRTQRLASLLTYAGPIKAPDDAAAPQTPDTACVHGELLAAKRERFAAVINRFLDLHQILRG.

This sequence belongs to the herpesviridae TRM2 protein family. In terms of assembly, associates with TRM1 and TRM3 to form the tripartite terminase complex.

The protein resides in the host nucleus. Functionally, component of the molecular motor that translocates viral genomic DNA in empty capsid during DNA packaging. Forms a tripartite terminase complex together with TRM1 and TRM3 in the host cytoplasm. Once the complex reaches the host nucleus, it interacts with the capsid portal vertex. This portal forms a ring in which genomic DNA is translocated into the capsid. This Homo sapiens (Human) protein is Tripartite terminase subunit 2.